Here is a 128-residue protein sequence, read N- to C-terminus: Global transcriptional regulator Spx 1 (128 aa).

Residues C10 and C13 are joined by a disulfide bond.

It belongs to the ArsC family. Spx subfamily. As to quaternary structure, interacts with the C-terminal domain of the alpha subunit of the RNAP.

Its subcellular location is the cytoplasm. In terms of biological role, global transcriptional regulator that plays a key role in stress response and exerts either positive or negative regulation of genes. Acts by interacting with the C-terminal domain of the alpha subunit of the RNA polymerase (RNAP). This interaction can enhance binding of RNAP to the promoter region of target genes and stimulate their transcription, or block interaction of RNAP with activator. This is Global transcriptional regulator Spx 1 from Lactococcus lactis subsp. lactis (strain IL1403) (Streptococcus lactis).